A 652-amino-acid polypeptide reads, in one-letter code: 2-oxoglutarate carboxylase large subunit (652 aa).

Residues 26–288 (ILITDLTPRD…DTGIDMKKLD (263 aa)) enclose the Pyruvate carboxyltransferase domain. Residues 34–38 (RDGQQ) and Arg105 each bind substrate. Asp35 serves as a coordination point for a divalent metal cation. 3 residues coordinate a divalent metal cation: Lys196, His227, and His229. Lys196 bears the N6-carboxylysine mark. Thr362 contacts substrate. In terms of domain architecture, Biotinyl-binding spans 563–643 (AEEKGIPKAT…TPDDALLRIK (81 aa)). The residue at position 609 (Lys609) is an N6-biotinyllysine.

Heterohexadecamer of 8 large subunits and 8 small subunits. Requires Mg(2+) as cofactor. The cofactor is Mn(2+). It depends on Co(2+) as a cofactor. Biotinylated.

It catalyses the reaction hydrogencarbonate + 2-oxoglutarate + ATP = (S)-oxalosuccinate + ADP + phosphate + H(+). The polypeptide is 2-oxoglutarate carboxylase large subunit (Hydrogenobacter thermophilus (strain DSM 6534 / IAM 12695 / TK-6)).